Reading from the N-terminus, the 379-residue chain is Inositol 3-kinase (379 aa).

ATP-binding positions include serine 217, 267–270 (GAGD), and asparagine 294. The Proton acceptor role is filled by aspartate 270.

It belongs to the carbohydrate kinase pfkB family.

It carries out the reaction myo-inositol + ATP = 1D-myo-inositol 3-phosphate + ADP + H(+). Its function is as follows. Kinase that phosphorylates myo-inositol to produce multiple myo-inositol monophosphates, Ins(1)P, Ins(3)P, Ins(4)P, Ins(5)P and Ins(6)P. Participates in phytic acid biosynthesis in developing seeds. Phytic acid is the primary storage form of phosphorus in cereal grains and other plant seeds. In Zea mays (Maize), this protein is Inositol 3-kinase.